We begin with the raw amino-acid sequence, 90 residues long: DNA-binding protein HU-beta (90 aa).

It belongs to the bacterial histone-like protein family. Heterodimer of an alpha and a beta chain.

In terms of biological role, histone-like DNA-binding protein which is capable of wrapping DNA to stabilize it, and thus to prevent its denaturation under extreme environmental conditions. This is DNA-binding protein HU-beta (hupB) from Pseudomonas aeruginosa (strain ATCC 15692 / DSM 22644 / CIP 104116 / JCM 14847 / LMG 12228 / 1C / PRS 101 / PAO1).